The following is a 344-amino-acid chain: Isopentenyl-diphosphate delta-isomerase (344 aa).

9-10 (RK) lines the substrate pocket. Residues 65–67 (AMT), serine 95, and asparagine 124 each bind FMN. Glutamine 154 provides a ligand contact to substrate. Glutamate 155 contributes to the Mg(2+) binding site. Residues lysine 185, threonine 215, 259–261 (GVR), and 280–281 (SG) contribute to the FMN site.

This sequence belongs to the IPP isomerase type 2 family. As to quaternary structure, homooctamer. Dimer of tetramers. FMN serves as cofactor. It depends on NADPH as a cofactor. The cofactor is Mg(2+).

It localises to the cytoplasm. The enzyme catalyses isopentenyl diphosphate = dimethylallyl diphosphate. Functionally, involved in the biosynthesis of isoprenoids. Catalyzes the 1,3-allylic rearrangement of the homoallylic substrate isopentenyl (IPP) to its allylic isomer, dimethylallyl diphosphate (DMAPP). The protein is Isopentenyl-diphosphate delta-isomerase of Lacticaseibacillus casei (strain BL23) (Lactobacillus casei).